The following is a 205-amino-acid chain: Ribosomal RNA large subunit methyltransferase E (205 aa).

5 residues coordinate S-adenosyl-L-methionine: glycine 50, tryptophan 52, aspartate 67, asparagine 83, and aspartate 111. The active-site Proton acceptor is the lysine 151.

The protein belongs to the class I-like SAM-binding methyltransferase superfamily. RNA methyltransferase RlmE family.

The protein resides in the cytoplasm. The enzyme catalyses uridine(2552) in 23S rRNA + S-adenosyl-L-methionine = 2'-O-methyluridine(2552) in 23S rRNA + S-adenosyl-L-homocysteine + H(+). Specifically methylates the uridine in position 2552 of 23S rRNA at the 2'-O position of the ribose in the fully assembled 50S ribosomal subunit. This chain is Ribosomal RNA large subunit methyltransferase E, found in Thermoplasma acidophilum (strain ATCC 25905 / DSM 1728 / JCM 9062 / NBRC 15155 / AMRC-C165).